The sequence spans 123 residues: Cysteine-rich DPF motif domain-containing protein 1 (123 aa).

Residues 102–123 (RQDLEKRKAPSKRTPSQPGSRT) form a disordered region. The span at 114-123 (RTPSQPGSRT) shows a compositional bias: polar residues.

This sequence belongs to the CDPF1 family.

The protein is Cysteine-rich DPF motif domain-containing protein 1 (CDPF1) of Homo sapiens (Human).